A 313-amino-acid polypeptide reads, in one-letter code: Ribosomal RNA small subunit methyltransferase H (313 aa).

S-adenosyl-L-methionine-binding positions include 35–37, Asp-55, Phe-79, Asp-101, and Gln-108; that span reads GGH.

The protein belongs to the methyltransferase superfamily. RsmH family.

The protein resides in the cytoplasm. The enzyme catalyses cytidine(1402) in 16S rRNA + S-adenosyl-L-methionine = N(4)-methylcytidine(1402) in 16S rRNA + S-adenosyl-L-homocysteine + H(+). In terms of biological role, specifically methylates the N4 position of cytidine in position 1402 (C1402) of 16S rRNA. In Escherichia coli O6:H1 (strain CFT073 / ATCC 700928 / UPEC), this protein is Ribosomal RNA small subunit methyltransferase H.